The primary structure comprises 337 residues: Glyceraldehyde-3-phosphate dehydrogenase 2 (337 aa).

NADP(+) is bound by residues R11 to I12, D35, R80, and T122. Residues S153–T155, T184, R199, T212–G213, and R235 each bind D-glyceraldehyde 3-phosphate. C154 serves as the catalytic Nucleophile. N317 contributes to the NADP(+) binding site.

The protein belongs to the glyceraldehyde-3-phosphate dehydrogenase family. In terms of assembly, homotetramer.

Its subcellular location is the cytoplasm. It catalyses the reaction D-glyceraldehyde 3-phosphate + phosphate + NADP(+) = (2R)-3-phospho-glyceroyl phosphate + NADPH + H(+). The catalysed reaction is D-glyceraldehyde 3-phosphate + phosphate + NAD(+) = (2R)-3-phospho-glyceroyl phosphate + NADH + H(+). Its pathway is carbohydrate biosynthesis; Calvin cycle. Its function is as follows. Gap2 has a major role in carbon fixation as a component of the Calvin cycle. Catalyzes the oxidative phosphorylation of glyceraldehyde 3-phosphate (G3P) to 1,3-bisphosphoglycerate (BPG) using the cofactor NAD. The first reaction step involves the formation of a hemiacetal intermediate between G3P and a cysteine residue, and this hemiacetal intermediate is then oxidized to a thioester, with concomitant reduction of NAD to NADH. The reduced NADH is then exchanged with the second NAD, and the thioester is attacked by a nucleophilic inorganic phosphate to produce BPG. This Trichormus variabilis (strain ATCC 29413 / PCC 7937) (Anabaena variabilis) protein is Glyceraldehyde-3-phosphate dehydrogenase 2 (gap2).